The sequence spans 196 residues: Carnitine operon protein CaiE (196 aa).

The segment at 174–196 (QPLRQMEENRPRLQGTTDVTPKR) is disordered. Positions 187–196 (QGTTDVTPKR) are enriched in polar residues.

This sequence belongs to the transferase hexapeptide repeat family.

It functions in the pathway amine and polyamine metabolism; carnitine metabolism. Overproduction of CaiE stimulates the activity of CaiB and CaiD. This Escherichia coli (strain K12) protein is Carnitine operon protein CaiE (caiE).